A 196-amino-acid chain; its full sequence is MLSSLSPYMANPRQTFTQVLNFALVLSTAFMLWKGLSVYTNSASPIVVVLSGSMEPAFQRGDLLFLWNRSPRVDVGEIVVYNVRGKDIPIVHRVMRTFPDVPGKDKTKKGGKQDVEASPSSLESQKLLTKGDNNLSDDTELYARGQDYLDRKEDIVGSVRGYIPAVGYVTIMLSEHPWLKSVLLGFMGLMVILQRE.

At 1 to 14 (MLSSLSPYMANPRQ) the chain is on the cytoplasmic side. Residues 15-33 (TFTQVLNFALVLSTAFMLW) traverse the membrane as a helical; Signal-anchor for type II membrane protein segment. At 34–196 (KGLSVYTNSA…MGLMVILQRE (163 aa)) the chain is on the lumenal side. Catalysis depends on charge relay system residues S53 and H92. Residues 101–133 (VPGKDKTKKGGKQDVEASPSSLESQKLLTKGDN) form a disordered region. Residues 118-133 (SPSSLESQKLLTKGDN) show a composition bias toward polar residues. N134 carries N-linked (GlcNAc...) asparagine glycosylation. The active-site Charge relay system is the D138. The tract at residues 182 to 193 (VLLGFMGLMVIL) is C-terminal short (CTS) helix.

This sequence belongs to the peptidase S26B family. Component of the signal peptidase complex (SPC) composed of a catalytic subunit SEC11 and three accessory subunits SPC1, SPC2 and SPC3. The complex induces a local thinning of the ER membrane which is used to measure the length of the signal peptide (SP) h-region of protein substrates. This ensures the selectivity of the complex towards h-regions shorter than 18-20 amino acids. SPC associates with the translocon complex.

The protein resides in the endoplasmic reticulum membrane. It catalyses the reaction Cleavage of hydrophobic, N-terminal signal or leader sequences from secreted and periplasmic proteins.. Its function is as follows. Catalytic component of the signal peptidase complex (SPC) which catalyzes the cleavage of N-terminal signal sequences from nascent proteins as they are translocated into the lumen of the endoplasmic reticulum. Specifically cleaves N-terminal signal peptides that contain a hydrophobic alpha-helix (h-region) shorter than 18-20 amino acids. This chain is Signal peptidase complex catalytic subunit SEC11 (SEC11), found in Blastomyces gilchristii (strain SLH14081) (Blastomyces dermatitidis).